The chain runs to 250 residues: 3-deoxy-manno-octulosonate cytidylyltransferase (250 aa).

It belongs to the KdsB family.

The protein resides in the cytoplasm. The enzyme catalyses 3-deoxy-alpha-D-manno-oct-2-ulosonate + CTP = CMP-3-deoxy-beta-D-manno-octulosonate + diphosphate. It functions in the pathway nucleotide-sugar biosynthesis; CMP-3-deoxy-D-manno-octulosonate biosynthesis; CMP-3-deoxy-D-manno-octulosonate from 3-deoxy-D-manno-octulosonate and CTP: step 1/1. The protein operates within bacterial outer membrane biogenesis; lipopolysaccharide biosynthesis. Functionally, activates KDO (a required 8-carbon sugar) for incorporation into bacterial lipopolysaccharide in Gram-negative bacteria. In Actinobacillus pleuropneumoniae serotype 7 (strain AP76), this protein is 3-deoxy-manno-octulosonate cytidylyltransferase.